The primary structure comprises 85 residues: NAD(P)H-quinone oxidoreductase subunit O (85 aa).

It belongs to the complex I NdhO subunit family. In terms of assembly, NDH-1 can be composed of about 15 different subunits; different subcomplexes with different compositions have been identified which probably have different functions.

It localises to the cellular thylakoid membrane. The catalysed reaction is a plastoquinone + NADH + (n+1) H(+)(in) = a plastoquinol + NAD(+) + n H(+)(out). The enzyme catalyses a plastoquinone + NADPH + (n+1) H(+)(in) = a plastoquinol + NADP(+) + n H(+)(out). NDH-1 shuttles electrons from an unknown electron donor, via FMN and iron-sulfur (Fe-S) centers, to quinones in the respiratory and/or the photosynthetic chain. The immediate electron acceptor for the enzyme in this species is believed to be plastoquinone. Couples the redox reaction to proton translocation, and thus conserves the redox energy in a proton gradient. Cyanobacterial NDH-1 also plays a role in inorganic carbon-concentration. The polypeptide is NAD(P)H-quinone oxidoreductase subunit O (Synechococcus sp. (strain CC9311)).